Consider the following 198-residue polypeptide: Probable chorismate pyruvate-lyase (198 aa).

The substrate site is built by Arg-73, Leu-111, and Glu-172.

This sequence belongs to the UbiC family.

It localises to the cytoplasm. The enzyme catalyses chorismate = 4-hydroxybenzoate + pyruvate. Its pathway is cofactor biosynthesis; ubiquinone biosynthesis. Removes the pyruvyl group from chorismate, with concomitant aromatization of the ring, to provide 4-hydroxybenzoate (4HB) for the ubiquinone pathway. In Burkholderia lata (strain ATCC 17760 / DSM 23089 / LMG 22485 / NCIMB 9086 / R18194 / 383), this protein is Probable chorismate pyruvate-lyase.